The primary structure comprises 465 residues: UDP-N-acetylmuramate--L-alanine ligase (465 aa).

Position 112–118 (G112–T118) interacts with ATP.

Belongs to the MurCDEF family.

The protein resides in the cytoplasm. The enzyme catalyses UDP-N-acetyl-alpha-D-muramate + L-alanine + ATP = UDP-N-acetyl-alpha-D-muramoyl-L-alanine + ADP + phosphate + H(+). It functions in the pathway cell wall biogenesis; peptidoglycan biosynthesis. Cell wall formation. In Burkholderia vietnamiensis (strain G4 / LMG 22486) (Burkholderia cepacia (strain R1808)), this protein is UDP-N-acetylmuramate--L-alanine ligase.